Consider the following 967-residue polypeptide: RNA polymerase II C-terminal domain phosphatase-like 1 (967 aa).

The Nuclear localization signal (NLS) signature appears at 38–41 (RKKK). In terms of domain architecture, FCP1 homology spans 151–401 (LNLRCLGIVF…TPVLCVARNV (251 aa)). Disordered stretches follow at residues 548 to 611 (SEPS…VQSR) and 643 to 712 (MEKH…RNSD). Over residues 590–603 (PSEPSFPQRPPVQA) the composition is skewed to pro residues. A compositionally biased stretch (basic and acidic residues) spans 665–684 (RMLHENRRPPKESLRRDEQL). DRBM domains are found at residues 724–792 (TETS…NLAD) and 855–925 (GSIT…SVRS). A disordered region spans residues 928–967 (GQPLHKRQGSPRSFGGMSNKRLKPDFQRSLQRMPSSGRYS). A required for nuclear localization (NLS) region spans residues 945-967 (SNKRLKPDFQRSLQRMPSSGRYS). Residues 947-951 (KRLKP) carry the Nuclear localization signal (NLS) motif. Residues 955-967 (RSLQRMPSSGRYS) show a composition bias toward polar residues.

As to quaternary structure, interacts with FREE1, ANAC019, MYB3, MYB4 and MYB32. Binds to DMS3. Interacts with RCF3. Interacts with RS40 and RS41. Interacts with EIF4A3. Interacts with UPF3. Mg(2+) serves as cofactor. Requires Co(2+) as cofactor. The cofactor is Mn(2+). As to expression, expressed at very low levels in roots, leaves, stems, flowers and siliques.

It localises to the nucleus. The protein localises to the nucleus speckle. The catalysed reaction is O-phospho-L-seryl-[protein] + H2O = L-seryl-[protein] + phosphate. The enzyme catalyses O-phospho-L-threonyl-[protein] + H2O = L-threonyl-[protein] + phosphate. Functionally, processively dephosphorylates 'Ser-5' but not 'Ser-2' of the heptad repeats YSPTSPS in the C-terminal domain of the largest RNA polymerase II subunit (RPB1). This promotes the activity of RNA polymerase II. Together with CPL2, required for male gametes fertility. Multifunctional regulator that modulates plant growth, stress, and phytohormones responses. Negative regulator of stress gene transcription involved in abscisic acid (ABA) mediated and jasmonic acid (JA) mediated signaling pathways, NaCl, osmotic stress, wounding, and cold resistance. Negatively regulates the expression of jasmonic acid (JA) biosynthetic genes in response to wounding. Forms a complex with RCF3 that modulates co-transcriptional processes such as mRNA capping and polyadenylation, and functions to repress stress-inducible gene expression. Dephosphorylates RCF3. Involved in the dephosphorylation of EIF4A3. This dephosphorylation retains EIF4A3 in the nucleus and limits its accumulation in the cytoplasm. Is essential for the degradation of the nonsense-mediated mRNA decay (NMD) transcripts. The polypeptide is RNA polymerase II C-terminal domain phosphatase-like 1 (Arabidopsis thaliana (Mouse-ear cress)).